A 276-amino-acid polypeptide reads, in one-letter code: Release factor glutamine methyltransferase (276 aa).

S-adenosyl-L-methionine-binding positions include 116–120 (GTGTG), Asp139, Trp167, and Asn182. A substrate-binding site is contributed by 182–185 (NPPY).

It belongs to the protein N5-glutamine methyltransferase family. PrmC subfamily.

The enzyme catalyses L-glutaminyl-[peptide chain release factor] + S-adenosyl-L-methionine = N(5)-methyl-L-glutaminyl-[peptide chain release factor] + S-adenosyl-L-homocysteine + H(+). Functionally, methylates the class 1 translation termination release factors RF1/PrfA and RF2/PrfB on the glutamine residue of the universally conserved GGQ motif. This is Release factor glutamine methyltransferase from Pseudomonas aeruginosa (strain ATCC 15692 / DSM 22644 / CIP 104116 / JCM 14847 / LMG 12228 / 1C / PRS 101 / PAO1).